The following is a 691-amino-acid chain: Probable serine/threonine-protein kinase pXi (691 aa).

The region spanning 18–263 is the Protein kinase domain; it reads YEIGSQIGNG…IDQTLKHPWI (246 aa). ATP contacts are provided by residues 24 to 32 and lysine 47; that span reads IGNGKFAQV. Catalysis depends on aspartate 137, which acts as the Proton acceptor. 4 disordered regions span residues 314 to 350, 420 to 447, 510 to 536, and 600 to 620; these read TPIK…ENEN, ENDS…KFTS, QHNN…GNGT, and GGSG…KKDK. The segment covering 322–336 has biased composition (low complexity); it reads NNNNNNNNNNNNNNN. Residues 338 to 350 show a composition bias toward basic and acidic residues; sequence ILDKKSNENENEN. 3 stretches are compositionally biased toward low complexity: residues 423-433, 512-536, and 600-615; these read SSSSETYSSSS, NNNI…GNGT, and GGSG…TGGS. Positions 642-691 form a coiled coil; the sequence is PKETMDKLASVLSNYKQKNQEKSLKVKYEKQKDKYKKLKSQLKKDKSLLK.

Belongs to the protein kinase superfamily. CAMK Ser/Thr protein kinase family.

It carries out the reaction L-seryl-[protein] + ATP = O-phospho-L-seryl-[protein] + ADP + H(+). The catalysed reaction is L-threonyl-[protein] + ATP = O-phospho-L-threonyl-[protein] + ADP + H(+). The polypeptide is Probable serine/threonine-protein kinase pXi (pXi) (Dictyostelium discoideum (Social amoeba)).